Consider the following 283-residue polypeptide: Lysozyme-like protein 7 (283 aa).

Residues 1-18 (MAHKSIVIFSVLAVLCHS) form the signal peptide. One can recognise a Ch-type lysozyme domain in the interval 53-273 (YAYALDIYVQ…AVEEDGKIYA (221 aa)).

It belongs to the glycosyl hydrolase 25 family. In terms of tissue distribution, expressed in intestine. Expressed in rectal gland cells and head neurons.

Plays a role in resistance to Gram-positive bacteria B.thuringiensis and M.nematophilum and Gram-negative bacteria S.boydii or S.flexneri infection and to fungus C.neoformans infection. Plays a role in susceptibility to Gram-negative bacterium S.typhimurium infection. This is Lysozyme-like protein 7 from Caenorhabditis elegans.